The primary structure comprises 433 residues: Lipase 2 (433 aa).

Residues 165-167 (HGG) carry the Involved in the stabilization of the negatively charged intermediate by the formation of the oxyanion hole motif. Serine 239 acts as the Charge relay system in catalysis. Catalysis depends on residues aspartate 361 and histidine 391.

It belongs to the 'GDXG' lipolytic enzyme family.

The catalysed reaction is a triacylglycerol + H2O = a diacylglycerol + a fatty acid + H(+). This chain is Lipase 2 (lip2), found in Moraxella sp. (strain TA144).